The primary structure comprises 408 residues: 2-acyl-4-prenylphloroglucinol 6-prenyltransferase, chloroplastic (408 aa).

Residues 1-46 (MELSSACNLSLKPNYYYYPTSLFPSNNSYNNLKASSYYQTQRPIKC) constitute a chloroplast transit peptide. The next 9 membrane-spanning stretches (helical) occupy residues 119–139 (PIPF…ELLK), 146–166 (WQLM…HIYI), 193–213 (SVKS…LLMI), 217–237 (CGLF…MYSV), 257–277 (IGIG…GLPF), 281–301 (PPFT…SILK), 326–346 (IVLV…GVAI), 355–375 (YIMI…TWLL), and 388–408 (YYHF…FIST).

The protein belongs to the UbiA prenyltransferase family. In terms of assembly, homo- and heteromer. Interacts with PT1L, forming a functional metabolon. Requires Mg(2+) as cofactor. As to expression, expressed in trichomes.

The protein resides in the plastid. The protein localises to the chloroplast membrane. It carries out the reaction a 2-acyl-4-prenylphloroglucinol + dimethylallyl diphosphate = a 2-acyl-4,6-diprenylphloroglucinol + diphosphate. The catalysed reaction is a 2-acyl-4,6-diprenylphloroglucinol + dimethylallyl diphosphate = a 2-acyl-4,6,6-triprenylphloroglucinol + diphosphate. The protein operates within secondary metabolite biosynthesis. Functionally, involved in the biosynthesis of prenylated phenolics natural products which contribute to the bitter taste of beer and display broad biological activities. Catalyzes the two last prenylation steps in the beta-bitter acid pathway. Uses dimethylallyl diphosphate (DMAPP) as the prenyl donor. In Humulus lupulus (European hop), this protein is 2-acyl-4-prenylphloroglucinol 6-prenyltransferase, chloroplastic.